A 439-amino-acid chain; its full sequence is Methylenetetrahydrofolate--tRNA-(uracil-5-)-methyltransferase TrmFO (439 aa).

8–13 provides a ligand contact to FAD; the sequence is GAGLAG.

Belongs to the MnmG family. TrmFO subfamily. FAD serves as cofactor.

It is found in the cytoplasm. The enzyme catalyses uridine(54) in tRNA + (6R)-5,10-methylene-5,6,7,8-tetrahydrofolate + NADH + H(+) = 5-methyluridine(54) in tRNA + (6S)-5,6,7,8-tetrahydrofolate + NAD(+). It catalyses the reaction uridine(54) in tRNA + (6R)-5,10-methylene-5,6,7,8-tetrahydrofolate + NADPH + H(+) = 5-methyluridine(54) in tRNA + (6S)-5,6,7,8-tetrahydrofolate + NADP(+). Catalyzes the folate-dependent formation of 5-methyl-uridine at position 54 (M-5-U54) in all tRNAs. This is Methylenetetrahydrofolate--tRNA-(uracil-5-)-methyltransferase TrmFO from Lacticaseibacillus paracasei (strain ATCC 334 / BCRC 17002 / CCUG 31169 / CIP 107868 / KCTC 3260 / NRRL B-441) (Lactobacillus paracasei).